Consider the following 228-residue polypeptide: CMRF-35-like molecule 4 (228 aa).

Positions 1–24 (MIPRVIRLWLPSALFLSQVPGCVP) are cleaved as a signal peptide. In terms of domain architecture, Ig-like V-type spans 25-126 (LHGPSTITGA…FDGSLGFDKY (102 aa)). At 25 to 187 (LHGPSTITGA…QPRSLRSSLY (163 aa)) the chain is on the extracellular side. A disulfide bond links cysteine 43 and cysteine 110. Residue asparagine 90 is glycosylated (N-linked (GlcNAc...) asparagine). The disordered stretch occupies residues 139 to 174 (PVTGSSLESGRDILESPTSSVGHTHPSVTTDDTIPA). Polar residues predominate over residues 154-170 (SPTSSVGHTHPSVTTDD). The chain crosses the membrane as a helical span at residues 188–208 (FWVLVSLKLFLFLSMLGAVLW). At 209 to 228 (VNRPQRCSGGSSSRPCYENQ) the chain is on the cytoplasmic side.

This sequence belongs to the CD300 family. Interacts with TYROBP, HCST and FcR gamma. As to expression, present on the surface of mast cells, dendritic cells, peritoneal macrophages and a subset of B-cells (at protein level).

The protein localises to the cell membrane. Acts as an activating receptor in mast cells and macrophages. The chain is CMRF-35-like molecule 4 from Mus musculus (Mouse).